The sequence spans 303 residues: D-alanine--D-alanine ligase (303 aa).

In terms of domain architecture, ATP-grasp spans 104-300; that stretch reads KLLWNAVGLP…FERLVERVLE (197 aa). An ATP-binding site is contributed by 132-187; the sequence is IAKLGLPLFVKPASEGSSVGVSKVKTAEQLLPAIEEALKYDSIVLVEENLAGAEYS. Residues aspartate 254, glutamate 267, and asparagine 269 each contribute to the Mg(2+) site.

It belongs to the D-alanine--D-alanine ligase family. Requires Mg(2+) as cofactor. The cofactor is Mn(2+).

It localises to the cytoplasm. The enzyme catalyses 2 D-alanine + ATP = D-alanyl-D-alanine + ADP + phosphate + H(+). Its pathway is cell wall biogenesis; peptidoglycan biosynthesis. In terms of biological role, cell wall formation. The chain is D-alanine--D-alanine ligase from Glaesserella parasuis serovar 5 (strain SH0165) (Haemophilus parasuis).